Reading from the N-terminus, the 102-residue chain is MKSQKIRIRLKAFDHHMLDQSAQKIVETARRTGASVAGPVPLPTEKSIYTILRSPHVNKDSREQFEMRTHKRLIDILEPNPKTVDALMRLDLPAGVDIEIKL.

The protein belongs to the universal ribosomal protein uS10 family. As to quaternary structure, part of the 30S ribosomal subunit.

Its function is as follows. Involved in the binding of tRNA to the ribosomes. The polypeptide is Small ribosomal subunit protein uS10 (Pelotomaculum thermopropionicum (strain DSM 13744 / JCM 10971 / SI)).